The sequence spans 120 residues: Holo-[acyl-carrier-protein] synthase (120 aa).

The Mg(2+) site is built by D8 and E58.

The protein belongs to the P-Pant transferase superfamily. AcpS family. Mg(2+) is required as a cofactor.

It localises to the cytoplasm. It catalyses the reaction apo-[ACP] + CoA = holo-[ACP] + adenosine 3',5'-bisphosphate + H(+). Transfers the 4'-phosphopantetheine moiety from coenzyme A to a Ser of acyl-carrier-protein. This Limosilactobacillus reuteri (strain DSM 20016) (Lactobacillus reuteri) protein is Holo-[acyl-carrier-protein] synthase.